A 252-amino-acid polypeptide reads, in one-letter code: 5-oxoprolinase subunit A (252 aa).

This sequence belongs to the LamB/PxpA family. Forms a complex composed of PxpA, PxpB and PxpC.

It carries out the reaction 5-oxo-L-proline + ATP + 2 H2O = L-glutamate + ADP + phosphate + H(+). Catalyzes the cleavage of 5-oxoproline to form L-glutamate coupled to the hydrolysis of ATP to ADP and inorganic phosphate. The protein is 5-oxoprolinase subunit A of Mycobacterium ulcerans (strain Agy99).